The sequence spans 599 residues: Beta-(1--&gt;2)glucan export ATP-binding/permease protein NdvA (599 aa).

The ABC transmembrane type-1 domain occupies 21-301; that stretch reads TITMCVASVL…ISAFINQTVT (281 aa). The next 5 helical transmembrane spans lie at 22–42, 55–75, 156–176, 248–268, and 276–296; these read ITMC…PVLF, IFSP…AAVF, MRMS…GQLV, MAST…VTKG, and IAFI…SAFI. The 235-residue stretch at 335–569 folds into the ABC transporter domain; sequence IVFDNVTYEF…GGRFSDLLRA (235 aa). 368-375 provides a ligand contact to ATP; the sequence is GPTGAGKT.

The protein belongs to the ABC transporter superfamily. Beta-(1--&gt;2)glucan exporter (TC 3.A.1.108.1) family. Homodimer.

It localises to the cell inner membrane. It carries out the reaction [(1-&gt;2)-beta-D-glucosyl](n)(in) + ATP + H2O = [(1-&gt;2)-beta-D-glucosyl](n)(out) + ADP + phosphate + H(+). In terms of biological role, involved in beta-(1--&gt;2)glucan export. Its export to the periplasmic space is required to exert its action as a virulence factor. Transmembrane domains (TMD) form a pore in the inner membrane and the ATP-binding domain (NBD) is responsible for energy generation. The chain is Beta-(1--&gt;2)glucan export ATP-binding/permease protein NdvA from Brucella abortus (strain 2308).